The sequence spans 172 residues: Crossover junction endodeoxyribonuclease RuvC (172 aa).

Residues D7, E67, and D140 contribute to the active site. Mg(2+) is bound by residues D7, E67, and D140.

The protein belongs to the RuvC family. As to quaternary structure, homodimer which binds Holliday junction (HJ) DNA. The HJ becomes 2-fold symmetrical on binding to RuvC with unstacked arms; it has a different conformation from HJ DNA in complex with RuvA. In the full resolvosome a probable DNA-RuvA(4)-RuvB(12)-RuvC(2) complex forms which resolves the HJ. Requires Mg(2+) as cofactor.

It is found in the cytoplasm. The enzyme catalyses Endonucleolytic cleavage at a junction such as a reciprocal single-stranded crossover between two homologous DNA duplexes (Holliday junction).. In terms of biological role, the RuvA-RuvB-RuvC complex processes Holliday junction (HJ) DNA during genetic recombination and DNA repair. Endonuclease that resolves HJ intermediates. Cleaves cruciform DNA by making single-stranded nicks across the HJ at symmetrical positions within the homologous arms, yielding a 5'-phosphate and a 3'-hydroxyl group; requires a central core of homology in the junction. The consensus cleavage sequence is 5'-(A/T)TT(C/G)-3'. Cleavage occurs on the 3'-side of the TT dinucleotide at the point of strand exchange. HJ branch migration catalyzed by RuvA-RuvB allows RuvC to scan DNA until it finds its consensus sequence, where it cleaves and resolves the cruciform DNA. In Syntrophomonas wolfei subsp. wolfei (strain DSM 2245B / Goettingen), this protein is Crossover junction endodeoxyribonuclease RuvC.